The primary structure comprises 359 residues: Molybdenum import ATP-binding protein ModC (359 aa).

Positions 1–233 (MSGLTVSIRG…IDAESEGGGV (233 aa)) constitute an ABC transporter domain. Position 32–39 (32–39 (GHSGAGKT)) interacts with ATP. Positions 289-355 (AISIRNLLPV…VKAVSVDRAA (67 aa)) constitute a Mop domain.

It belongs to the ABC transporter superfamily. Molybdate importer (TC 3.A.1.8) family. In terms of assembly, the complex is composed of two ATP-binding proteins (ModC), two transmembrane proteins (ModB) and a solute-binding protein (ModA).

It is found in the cell inner membrane. It catalyses the reaction molybdate(out) + ATP + H2O = molybdate(in) + ADP + phosphate + H(+). Functionally, part of the ABC transporter complex ModABC involved in molybdenum import. Responsible for energy coupling to the transport system. In Brucella abortus (strain 2308), this protein is Molybdenum import ATP-binding protein ModC.